Consider the following 200-residue polypeptide: Recombination protein RecR (200 aa).

Residues Cys57 to Cys72 form a C4-type zinc finger. Residues Thr80 to Pro175 form the Toprim domain.

It belongs to the RecR family.

Functionally, may play a role in DNA repair. It seems to be involved in an RecBC-independent recombinational process of DNA repair. It may act with RecF and RecO. This Pseudomonas putida (strain W619) protein is Recombination protein RecR.